A 436-amino-acid polypeptide reads, in one-letter code: 3-ketoacyl-CoA thiolase (436 aa).

Cysteine 99 (acyl-thioester intermediate) is an active-site residue. Catalysis depends on proton acceptor residues histidine 392 and cysteine 422.

It belongs to the thiolase-like superfamily. Thiolase family. As to quaternary structure, heterotetramer of two alpha chains (FadJ) and two beta chains (FadI).

The protein resides in the cytoplasm. The catalysed reaction is an acyl-CoA + acetyl-CoA = a 3-oxoacyl-CoA + CoA. The protein operates within lipid metabolism; fatty acid beta-oxidation. Functionally, catalyzes the final step of fatty acid oxidation in which acetyl-CoA is released and the CoA ester of a fatty acid two carbons shorter is formed. This Shigella flexneri protein is 3-ketoacyl-CoA thiolase.